A 446-amino-acid polypeptide reads, in one-letter code: O-antigen polymerase (446 aa).

The next 11 helical transmembrane spans lie at I11 to E31, F33 to I53, Q58 to I78, I104 to Y124, Q147 to Y167, L186 to F206, N211 to L231, L252 to L272, I355 to F375, K391 to A411, and L415 to V435.

It is found in the cell inner membrane. It carries out the reaction n lipid-linked O-antigen repeat units = a lipid-linked O antigen + (n-1) polyisoprenyl diphosphate.. The protein operates within bacterial outer membrane biogenesis; LPS O-antigen biosynthesis. In terms of biological role, polymerase involved in the biosynthesis of the lipopolysaccharide (LPS). Catalyzes the polymerization of the O-antigen repeat units on the periplasmic face of the inner membrane, leading to the formation of the lipid-linked O-antigen molecule. In vitro, shows a preference for bacteria-based, undecaprenyl-containing substrates rather than eukaryote-based, dolichol-containing substrates. The protein is O-antigen polymerase of Escherichia coli.